The chain runs to 515 residues: Protein disulfide-isomerase (515 aa).

The signal sequence occupies residues 1-25 (MAISKVWISLLLALAVVLSAPAARA). Residues 26–150 (EEAAAAEEAA…IVEYLKKQVG (125 aa)) form the Thioredoxin 1 domain. Residues cysteine 68 and cysteine 71 each act as nucleophile in the active site. An intrachain disulfide couples cysteine 68 to cysteine 71. Residue asparagine 283 is glycosylated (N-linked (GlcNAc...) asparagine). The region spanning 346-489 (LKEQVEAGQI…IVDYIKKNKE (144 aa)) is the Thioredoxin 2 domain. Residues cysteine 412 and cysteine 415 each act as nucleophile in the active site. An intrachain disulfide couples cysteine 412 to cysteine 415. The segment covering 494-509 (AAAAATEKAAEPAATE) has biased composition (low complexity). Residues 494 to 515 (AAAAATEKAAEPAATEPLKDEL) form a disordered region. The short motif at 512 to 515 (KDEL) is the Prevents secretion from ER element.

This sequence belongs to the protein disulfide isomerase family.

It localises to the endoplasmic reticulum lumen. The enzyme catalyses Catalyzes the rearrangement of -S-S- bonds in proteins.. In terms of biological role, participates in the folding of proteins containing disulfide bonds, may be involved in glycosylation, prolyl hydroxylation and triglyceride transfer. This is Protein disulfide-isomerase (PDI) from Triticum aestivum (Wheat).